A 193-amino-acid chain; its full sequence is Interleukin-18 (193 aa).

A propeptide spanning residues 1 to 36 (MAAEQVEDYCISFVEMKFINNTLYFVAENDEDLESD) is cleaved from the precursor.

This sequence belongs to the IL-1 family. Forms a ternary complex with ligand-binding receptor subunit IL18R1 and signaling receptor subunit IL18RAP at the plasma membrane. Mature IL18 first binds to IL18R1 forming a low affinity binary complex, which then interacts with IL18RAP to form a high affinity ternary complex that signals inside the cell. Interacts with cargo receptor TMED10; the interaction mediates the translocation from the cytoplasm into the ERGIC (endoplasmic reticulum-Golgi intermediate compartment) and thereby secretion. In terms of processing, the pro-IL-18 precursor is processed by CASP1, CASP4 or CASP5 to yield its mature, active form. The pro-IL-18 precursor features autoinhibitory interactions between the propeptide and the post-cleavage-site region, preventing recognition by the IL18R1 receptor. Processing by CASP1, CASP4 or CASP5 induces conformational changes to generate critical receptor-binding sites. The mature form is then secreted and released in the extracellular milieu by passing through the gasdermin-D (GSDMD) pore. In contrast, cleavage by CASP3 inactivates IL18.

Its subcellular location is the cytoplasm. It localises to the cytosol. The protein localises to the secreted. Pro-inflammatory cytokine primarily involved in epithelial barrier repair, polarized T-helper 1 (Th1) cell and natural killer (NK) cell immune responses. Upon binding to IL18R1 and IL18RAP, forms a signaling ternary complex which activates NF-kappa-B, triggering synthesis of inflammatory mediators. Synergizes with IL12/interleukin-12 to induce IFNG synthesis from T-helper 1 (Th1) cells and natural killer (NK) cells. Involved in transduction of inflammation downstream of pyroptosis: its mature form is specifically released in the extracellular milieu by passing through the gasdermin-D (GSDMD) pore. This is Interleukin-18 (IL18) from Bos taurus (Bovine).